We begin with the raw amino-acid sequence, 95 residues long: uncharacterized protein (95 aa).

A run of 2 repeats spans residues 67 to 74 (GCGCGCGC) and 85 to 92 (CGGCCGCG). A 2 X 8 AA approximate repeats region spans residues 67 to 92 (GCGCGCGCATVAAVSPVPCGGCCGCG).

This is an uncharacterized protein from Caenorhabditis elegans.